A 440-amino-acid chain; its full sequence is tRNA (guanine(37)-N(1))-methyltransferase (440 aa).

Residues His217, 255-256, 283-284, and Asn315 each bind S-adenosyl-L-methionine; these read DL and DG.

The protein belongs to the class I-like SAM-binding methyltransferase superfamily. TRM5/TYW2 family. In terms of assembly, monomer.

The protein localises to the mitochondrion matrix. It is found in the nucleus. It localises to the cytoplasm. It carries out the reaction guanosine(37) in tRNA + S-adenosyl-L-methionine = N(1)-methylguanosine(37) in tRNA + S-adenosyl-L-homocysteine + H(+). Functionally, specifically methylates the N1 position of guanosine-37 in various cytoplasmic and mitochondrial tRNAs. Methylation is not dependent on the nature of the nucleoside 5' of the target nucleoside. This is the first step in the biosynthesis of wybutosine (yW), a modified base adjacent to the anticodon of tRNAs and required for accurate decoding. The sequence is that of tRNA (guanine(37)-N(1))-methyltransferase from Drosophila pseudoobscura pseudoobscura (Fruit fly).